We begin with the raw amino-acid sequence, 85 residues long: Conotoxin Lt28.5 (85 aa).

The signal sequence occupies residues 1–21 (MPKLEMMLLVLLILPLCYIDA). A propeptide spanning residues 22 to 40 (VGPPPPWNMEDEIIEHWQK) is cleaved from the precursor.

This sequence belongs to the conotoxin D superfamily. Post-translationally, contains 5 disulfide bonds. As to expression, expressed by the venom duct.

Its subcellular location is the secreted. In terms of biological role, probable neurotoxin. In Conus litteratus (Lettered cone), this protein is Conotoxin Lt28.5.